We begin with the raw amino-acid sequence, 182 residues long: MRHRILTLLLGLAVLVTAGCGFHLRGTTQVPAELKKLQITSSDPYGPLARSVRQQLRLNNVTILEDGSADVPVLKLIDSSENKDTVSVFQDGKAAERQLTLNVNAQVIMPDGSVYPLRSRVDRSFFDNPLEALAKDAENEIINQEMREQAARRLVRQLLTVHNAEKQKAREKQVGQQAAQAQ.

The N-terminal stretch at 1–19 (MRHRILTLLLGLAVLVTAG) is a signal peptide. Cys-20 is lipidated: N-palmitoyl cysteine. Cys-20 carries the S-diacylglycerol cysteine lipid modification.

This sequence belongs to the LptE lipoprotein family. Component of the lipopolysaccharide transport and assembly complex. Interacts with LptD.

It is found in the cell outer membrane. Functionally, together with LptD, is involved in the assembly of lipopolysaccharide (LPS) at the surface of the outer membrane. Required for the proper assembly of LptD. Binds LPS and may serve as the LPS recognition site at the outer membrane. The chain is LPS-assembly lipoprotein LptE from Photorhabdus laumondii subsp. laumondii (strain DSM 15139 / CIP 105565 / TT01) (Photorhabdus luminescens subsp. laumondii).